A 364-amino-acid polypeptide reads, in one-letter code: MVINFAAGPAKLPEEVLKEVQENLVNCNGSGISVMEMSHRSSNYAKIHDATISDLRELLNVPSNYKILLMQGGGTGQFAAVALNLIGKTGTADYVITGSWSAKAAKEAAQYGTVNAVLPKLAKYTTVPRQETWKLDPNASYVYYCDNETVEGVEFDFVPEVPAGVPLVADMSSNFLSRPFDVSKFGVIYAGAQKNIGPAGTTVIIVRDDLIGKHLKITPSILNFEQMDKNNSLLNTPPTFGIYVMGLVFKWIKRNGGVAGMAKLAAAKSKLIYDTINQSNGFYYCPVDVNVRSRMNVPFRIGSASGDDALEKEFLSKAEAEGMIQLKGHRSVGGIRASLYNAVTLAETQQLANLMLAFYKNNKN.

Arg-40 contacts L-glutamate. Pyridoxal 5'-phosphate-binding positions include 74 to 75, Trp-100, Thr-149, Asp-170, and Gln-193; that span reads GT. Lys-194 bears the N6-(pyridoxal phosphate)lysine mark. Residue 235-236 coordinates pyridoxal 5'-phosphate; that stretch reads NT.

Belongs to the class-V pyridoxal-phosphate-dependent aminotransferase family. SerC subfamily. In terms of assembly, homodimer. Pyridoxal 5'-phosphate serves as cofactor. Expressed in ovary and head.

The catalysed reaction is O-phospho-L-serine + 2-oxoglutarate = 3-phosphooxypyruvate + L-glutamate. It carries out the reaction 4-(phosphooxy)-L-threonine + 2-oxoglutarate = (R)-3-hydroxy-2-oxo-4-phosphooxybutanoate + L-glutamate. Its pathway is amino-acid biosynthesis; L-serine biosynthesis; L-serine from 3-phospho-D-glycerate: step 2/3. It functions in the pathway cofactor biosynthesis; pyridoxine 5'-phosphate biosynthesis; pyridoxine 5'-phosphate from D-erythrose 4-phosphate: step 3/5. Its function is as follows. Catalyzes the reversible conversion of 3-phosphohydroxypyruvate to phosphoserine and of 3-hydroxy-2-oxo-4-phosphonooxybutanoate to phosphohydroxythreonine. The chain is Phosphoserine aminotransferase from Drosophila melanogaster (Fruit fly).